Consider the following 483-residue polypeptide: Aspartyl/glutamyl-tRNA(Asn/Gln) amidotransferase subunit B (483 aa).

This sequence belongs to the GatB/GatE family. GatB subfamily. In terms of assembly, heterotrimer of A, B and C subunits.

The catalysed reaction is L-glutamyl-tRNA(Gln) + L-glutamine + ATP + H2O = L-glutaminyl-tRNA(Gln) + L-glutamate + ADP + phosphate + H(+). It carries out the reaction L-aspartyl-tRNA(Asn) + L-glutamine + ATP + H2O = L-asparaginyl-tRNA(Asn) + L-glutamate + ADP + phosphate + 2 H(+). Its function is as follows. Allows the formation of correctly charged Asn-tRNA(Asn) or Gln-tRNA(Gln) through the transamidation of misacylated Asp-tRNA(Asn) or Glu-tRNA(Gln) in organisms which lack either or both of asparaginyl-tRNA or glutaminyl-tRNA synthetases. The reaction takes place in the presence of glutamine and ATP through an activated phospho-Asp-tRNA(Asn) or phospho-Glu-tRNA(Gln). In Rickettsia rickettsii (strain Iowa), this protein is Aspartyl/glutamyl-tRNA(Asn/Gln) amidotransferase subunit B.